The following is a 188-amino-acid chain: Small ribosomal subunit protein uS7 (188 aa).

This sequence belongs to the universal ribosomal protein uS7 family. Part of the 30S ribosomal subunit.

Its function is as follows. One of the primary rRNA binding proteins, it binds directly to 16S rRNA where it nucleates assembly of the head domain of the 30S subunit. Is located at the subunit interface close to the decoding center. The chain is Small ribosomal subunit protein uS7 from Methanococcus maripaludis (strain DSM 14266 / JCM 13030 / NBRC 101832 / S2 / LL).